The chain runs to 445 residues: Trigger factor (445 aa).

One can recognise a PPIase FKBP-type domain in the interval 168–253 (GDAVIVDFVG…IHEVRAPQTP (86 aa)).

The protein belongs to the FKBP-type PPIase family. Tig subfamily.

It localises to the cytoplasm. The catalysed reaction is [protein]-peptidylproline (omega=180) = [protein]-peptidylproline (omega=0). Functionally, involved in protein export. Acts as a chaperone by maintaining the newly synthesized protein in an open conformation. Functions as a peptidyl-prolyl cis-trans isomerase. This Hyphomonas neptunium (strain ATCC 15444) protein is Trigger factor.